Consider the following 363-residue polypeptide: MAP kinase kinase skh1/pek1 (363 aa).

In terms of domain architecture, Protein kinase spans Ile79–Val343. Residues Leu85–Val93 and Lys108 contribute to the ATP site. Catalysis depends on Asp206, which acts as the Proton acceptor. At Ser234 the chain carries Phosphoserine. Thr238 carries the post-translational modification Phosphothreonine.

The protein belongs to the protein kinase superfamily. STE Ser/Thr protein kinase family. MAP kinase kinase subfamily.

It catalyses the reaction L-seryl-[protein] + ATP = O-phospho-L-seryl-[protein] + ADP + H(+). It carries out the reaction L-threonyl-[protein] + ATP = O-phospho-L-threonyl-[protein] + ADP + H(+). The catalysed reaction is L-tyrosyl-[protein] + ATP = O-phospho-L-tyrosyl-[protein] + ADP + H(+). Activated by mkh1. Involved in the mkh1 signal transduction pathway that plays a role in cell wall integrity. Activates spm1/pmk1 via phosphorylation. In Schizosaccharomyces pombe (strain 972 / ATCC 24843) (Fission yeast), this protein is MAP kinase kinase skh1/pek1 (skh1).